Consider the following 416-residue polypeptide: Phosphoglycerate kinase (416 aa).

Residues V23, D24, F25, N26, Q38, R39, S62, H63, G65, R66, L121, R122, H168, and R169 each coordinate (2R)-3-phosphoglycerate. G212 contributes to the ADP binding site. G212 contacts CDP. Residues A213 and K214 each contribute to the AMP site. A213 lines the ATP pocket. A213 provides a ligand contact to Mg(2+). D217 provides a ligand contact to CDP. D217 contacts Mg(2+). K218 is a binding site for AMP. Residue K218 participates in ATP binding. Residue G236 participates in ADP binding. G236 is a binding site for CDP. Residues G237 and G311 each coordinate AMP. Residues G237 and G311 each contribute to the ATP site. CDP contacts are provided by G336 and F341. Residue F341 coordinates ADP. Position 342 (E342) interacts with AMP. ATP-binding residues include E342, D373, and T374. Residue D373 participates in Mg(2+) binding.

It belongs to the phosphoglycerate kinase family. As to quaternary structure, monomer. It depends on Mg(2+) as a cofactor.

It localises to the cytoplasm. The protein resides in the mitochondrion. The enzyme catalyses (2R)-3-phosphoglycerate + ATP = (2R)-3-phospho-glyceroyl phosphate + ADP. The protein operates within carbohydrate degradation; glycolysis; pyruvate from D-glyceraldehyde 3-phosphate: step 2/5. Catalyzes one of the two ATP producing reactions in the glycolytic pathway via the reversible conversion of 1,3-diphosphoglycerate to 3-phosphoglycerate. Both L- and D- forms of purine and pyrimidine nucleotides can be used as substrates, but the activity is much lower on pyrimidines. Negatively regulates the biosynthesis of acetyl-CoA from pyruvate in the mitochondrion. This Komagataella pastoris (Yeast) protein is Phosphoglycerate kinase (PGK1).